A 678-amino-acid chain; its full sequence is MSNEREMQNKKDQQLESFRVEDEGKKLTTNQGLKVSEDEFSLKAGERGPTLMEDFHFREKMTHFDHERIPERIVHARGFAAHGEFQVYDSMKEFTKAKFLQDPSVKTPVFVRFSTVAGSKGSAETVRDARGFATKFYTEEGNYDLVGNNIPVFFIQDAIKFPDLVHALKPEPHNEIPQAQSAHDTFWDFIANNQESAHMVMWAMSDRSIPRSFRMMEGFGVHTFRFVNEEGKAHFVKFHWKPVLGIHSLVWDEAQKIAGKDPDFHRRDLWESIENGDYPEYELGVQLISEEDEFNFDFDVLDPTKIWPEEEVPVKIIGKMTLNRNVDNVFAETEQVAFHPGHVVPGIDFTNDPLLQGRLFSYTDTQLIRLGGPNFHELPINRPVCPFHNNQRDGYGRQTINKGQVSYHKNSLAANTPQPASEEEGGYAHYQEKVEGRKVRKRSESFKDHFSQAKLFWNSMSEVEKNHIIEAFSFELGKVQSKSVQQQVVEMFAHVTSDLAKPVAEAIGANLPQSEGSSVTKSSLALSQENTIKKPDTRKVGVIIDNGFNGDEVKQVLNELQSKGIQAEFISDKLGIKKCAGGSEIEIDHTFLTGESVLFDALYVVGGKEVDPSFKDDAVYFIKEAYAHFKPIGATHVGIKWLEEQEIVEKEGVVTGTDMNIFSQNLTGAVMEHRHWNR.

Over residues 1–26 the composition is skewed to basic and acidic residues; it reads MSNEREMQNKKDQQLESFRVEDEGKK. Positions 1–32 are disordered; it reads MSNEREMQNKKDQQLESFRVEDEGKKLTTNQG. Active-site residues include histidine 75 and asparagine 148. Tyrosine 362 contacts heme.

Belongs to the catalase family. HPII subfamily. The cofactor is heme.

The protein localises to the cytoplasm. It carries out the reaction 2 H2O2 = O2 + 2 H2O. In terms of biological role, decomposes hydrogen peroxide into water and oxygen; serves to protect cells from the toxic effects of hydrogen peroxide. In Alkalihalophilus pseudofirmus (strain ATCC BAA-2126 / JCM 17055 / OF4) (Bacillus pseudofirmus), this protein is Catalase (katE).